The following is a 75-amino-acid chain: Tautomerase PptA (75 aa).

Proline 2 serves as the catalytic Proton acceptor; via imino nitrogen.

This sequence belongs to the 4-oxalocrotonate tautomerase family. PptA subfamily. In terms of assembly, homodimer.

It localises to the cytoplasm. The polypeptide is Tautomerase PptA (Klebsiella pneumoniae (strain 342)).